The sequence spans 145 residues: NADH-quinone oxidoreductase subunit A 1 (145 aa).

Transmembrane regions (helical) follow at residues 18 to 38, 71 to 91, and 104 to 124; these read ILPL…LLLA, VPFY…VFIF, and GLIH…WLWL.

It belongs to the complex I subunit 3 family. As to quaternary structure, NDH-1 is composed of 14 different subunits. Subunits NuoA, H, J, K, L, M, N constitute the membrane sector of the complex.

Its subcellular location is the cell inner membrane. It catalyses the reaction a quinone + NADH + 5 H(+)(in) = a quinol + NAD(+) + 4 H(+)(out). In terms of biological role, NDH-1 shuttles electrons from NADH, via FMN and iron-sulfur (Fe-S) centers, to quinones in the respiratory chain. The immediate electron acceptor for the enzyme in this species is believed to be ubiquinone. Couples the redox reaction to proton translocation (for every two electrons transferred, four hydrogen ions are translocated across the cytoplasmic membrane), and thus conserves the redox energy in a proton gradient. The sequence is that of NADH-quinone oxidoreductase subunit A 1 from Geotalea uraniireducens (strain Rf4) (Geobacter uraniireducens).